Reading from the N-terminus, the 132-residue chain is uncharacterized protein (132 aa).

Residues 1-24 form the signal peptide; the sequence is MVTIGSSSLVLFLFFVVFVQITYT. 2 helical membrane-spanning segments follow: residues 75–95 and 112–132; these read YVNV…ILGI and ESAI…VYIH.

The protein localises to the membrane. This is an uncharacterized protein from Saccharomyces cerevisiae (strain ATCC 204508 / S288c) (Baker's yeast).